The following is a 429-amino-acid chain: Serine--tRNA ligase (429 aa).

229–231 (TAE) contacts L-serine. ATP is bound at residue 260–262 (RSE). Glu-283 contacts L-serine. An ATP-binding site is contributed by 347–350 (EISS). Ser-383 lines the L-serine pocket.

The protein belongs to the class-II aminoacyl-tRNA synthetase family. Type-1 seryl-tRNA synthetase subfamily. Homodimer. The tRNA molecule binds across the dimer.

The protein resides in the cytoplasm. The catalysed reaction is tRNA(Ser) + L-serine + ATP = L-seryl-tRNA(Ser) + AMP + diphosphate + H(+). The enzyme catalyses tRNA(Sec) + L-serine + ATP = L-seryl-tRNA(Sec) + AMP + diphosphate + H(+). It participates in aminoacyl-tRNA biosynthesis; selenocysteinyl-tRNA(Sec) biosynthesis; L-seryl-tRNA(Sec) from L-serine and tRNA(Sec): step 1/1. Its function is as follows. Catalyzes the attachment of serine to tRNA(Ser). Is also able to aminoacylate tRNA(Sec) with serine, to form the misacylated tRNA L-seryl-tRNA(Sec), which will be further converted into selenocysteinyl-tRNA(Sec). The sequence is that of Serine--tRNA ligase from Orientia tsutsugamushi (strain Ikeda) (Rickettsia tsutsugamushi).